Reading from the N-terminus, the 285-residue chain is UDP-3-O-acyl-N-acetylglucosamine deacetylase (285 aa).

The Zn(2+) site is built by H89, H243, and D247. Catalysis depends on H270, which acts as the Proton donor.

The protein belongs to the LpxC family. It depends on Zn(2+) as a cofactor.

The catalysed reaction is a UDP-3-O-[(3R)-3-hydroxyacyl]-N-acetyl-alpha-D-glucosamine + H2O = a UDP-3-O-[(3R)-3-hydroxyacyl]-alpha-D-glucosamine + acetate. Its pathway is glycolipid biosynthesis; lipid IV(A) biosynthesis; lipid IV(A) from (3R)-3-hydroxytetradecanoyl-[acyl-carrier-protein] and UDP-N-acetyl-alpha-D-glucosamine: step 2/6. Catalyzes the hydrolysis of UDP-3-O-myristoyl-N-acetylglucosamine to form UDP-3-O-myristoylglucosamine and acetate, the committed step in lipid A biosynthesis. In Thermosynechococcus vestitus (strain NIES-2133 / IAM M-273 / BP-1), this protein is UDP-3-O-acyl-N-acetylglucosamine deacetylase.